The sequence spans 356 residues: Photosystem II protein D1 (356 aa).

3 consecutive transmembrane segments (helical) span residues 29-46 (YVGWFGTLMIPTLLTATT), 118-133 (HFLIGIFCYMGRQWEL), and 142-156 (WICVAYSAPVSAATA). Residue His118 coordinates chlorophyll a. Residue Tyr126 coordinates pheophytin a. Asp170 and Glu189 together coordinate [CaMn4O5] cluster. Residues 197–218 (FHMLGVAGVFGGSLFSAMHGSL) traverse the membrane as a helical segment. A chlorophyll a-binding site is contributed by His198. A quinone contacts are provided by residues His215 and 264–265 (SF). His215 is a Fe cation binding site. His272 contacts Fe cation. A helical transmembrane segment spans residues 274 to 288 (FLGAWPVIGIWFTAM). His332, Glu333, Asp342, and Ala344 together coordinate [CaMn4O5] cluster. Residues 345–356 (SAEPVSAPVING) constitute a propeptide that is removed on maturation.

This sequence belongs to the reaction center PufL/M/PsbA/D family. PSII is composed of 1 copy each of membrane proteins PsbA, PsbB, PsbC, PsbD, PsbE, PsbF, PsbH, PsbI, PsbJ, PsbK, PsbL, PsbM, PsbT, PsbX, PsbY, PsbZ, Psb30/Ycf12, peripheral proteins PsbO, CyanoQ (PsbQ), PsbU, PsbV and a large number of cofactors. It forms dimeric complexes. It depends on The D1/D2 heterodimer binds P680, chlorophylls that are the primary electron donor of PSII, and subsequent electron acceptors. It shares a non-heme iron and each subunit binds pheophytin, quinone, additional chlorophylls, carotenoids and lipids. D1 provides most of the ligands for the Mn4-Ca-O5 cluster of the oxygen-evolving complex (OEC). There is also a Cl(-1) ion associated with D1 and D2, which is required for oxygen evolution. The PSII complex binds additional chlorophylls, carotenoids and specific lipids. as a cofactor. Post-translationally, tyr-161 forms a radical intermediate that is referred to as redox-active TyrZ, YZ or Y-Z. In terms of processing, C-terminally processed by CtpA; processing is essential to allow assembly of the oxygen-evolving complex and thus photosynthetic growth.

Its subcellular location is the cellular thylakoid membrane. The catalysed reaction is 2 a plastoquinone + 4 hnu + 2 H2O = 2 a plastoquinol + O2. Its function is as follows. Photosystem II (PSII) is a light-driven water:plastoquinone oxidoreductase that uses light energy to abstract electrons from H(2)O, generating O(2) and a proton gradient subsequently used for ATP formation. It consists of a core antenna complex that captures photons, and an electron transfer chain that converts photonic excitation into a charge separation. The D1/D2 (PsbA/PsbD) reaction center heterodimer binds P680, the primary electron donor of PSII as well as several subsequent electron acceptors. In Crocosphaera subtropica (strain ATCC 51142 / BH68) (Cyanothece sp. (strain ATCC 51142)), this protein is Photosystem II protein D1.